We begin with the raw amino-acid sequence, 126 residues long: Large ribosomal subunit protein bL12 (126 aa).

This sequence belongs to the bacterial ribosomal protein bL12 family. In terms of assembly, homodimer. Part of the ribosomal stalk of the 50S ribosomal subunit. Forms a multimeric L10(L12)X complex, where L10 forms an elongated spine to which 2 to 4 L12 dimers bind in a sequential fashion. Binds GTP-bound translation factors.

Its function is as follows. Forms part of the ribosomal stalk which helps the ribosome interact with GTP-bound translation factors. Is thus essential for accurate translation. The protein is Large ribosomal subunit protein bL12 of Moorella thermoacetica (strain ATCC 39073 / JCM 9320).